We begin with the raw amino-acid sequence, 385 residues long: ATP phosphoribosyltransferase regulatory subunit (385 aa).

This sequence belongs to the class-II aminoacyl-tRNA synthetase family. HisZ subfamily. As to quaternary structure, heteromultimer composed of HisG and HisZ subunits.

The protein localises to the cytoplasm. The protein operates within amino-acid biosynthesis; L-histidine biosynthesis; L-histidine from 5-phospho-alpha-D-ribose 1-diphosphate: step 1/9. Required for the first step of histidine biosynthesis. May allow the feedback regulation of ATP phosphoribosyltransferase activity by histidine. The sequence is that of ATP phosphoribosyltransferase regulatory subunit from Bordetella petrii (strain ATCC BAA-461 / DSM 12804 / CCUG 43448).